Here is a 468-residue protein sequence, read N- to C-terminus: Probable Xaa-Pro aminopeptidase PEPP (468 aa).

Mn(2+) contacts are provided by D264, D275, E398, and E438.

The protein belongs to the peptidase M24B family. The cofactor is Mn(2+).

It catalyses the reaction Release of any N-terminal amino acid, including proline, that is linked to proline, even from a dipeptide or tripeptide.. Catalyzes the removal of a penultimate prolyl residue from the N-termini of peptides. The protein is Probable Xaa-Pro aminopeptidase PEPP (PEPP) of Paracoccidioides brasiliensis (strain Pb03).